Consider the following 514-residue polypeptide: 2,3-bisphosphoglycerate-independent phosphoglycerate mutase (514 aa).

Residues D13 and S63 each coordinate Mn(2+). The Phosphoserine intermediate role is filled by S63. Residues H124, 154–155 (RD), R186, R192, 258–261 (RADR), and K332 each bind substrate. The Mn(2+) site is built by D399, H403, D440, H441, and H459.

This sequence belongs to the BPG-independent phosphoglycerate mutase family. In terms of assembly, monomer. Requires Mn(2+) as cofactor.

The enzyme catalyses (2R)-2-phosphoglycerate = (2R)-3-phosphoglycerate. It participates in carbohydrate degradation; glycolysis; pyruvate from D-glyceraldehyde 3-phosphate: step 3/5. In terms of biological role, catalyzes the interconversion of 2-phosphoglycerate and 3-phosphoglycerate. The sequence is that of 2,3-bisphosphoglycerate-independent phosphoglycerate mutase from Legionella pneumophila (strain Corby).